The sequence spans 334 residues: Aspartate carbamoyltransferase catalytic subunit (334 aa).

2 residues coordinate carbamoyl phosphate: Arg-71 and Thr-72. Lys-99 lines the L-aspartate pocket. Carbamoyl phosphate contacts are provided by Arg-121, His-151, and Gln-154. Arg-184 and Arg-239 together coordinate L-aspartate. Residues Gly-280 and Pro-281 each coordinate carbamoyl phosphate.

The protein belongs to the aspartate/ornithine carbamoyltransferase superfamily. ATCase family. As to quaternary structure, heterododecamer (2C3:3R2) of six catalytic PyrB chains organized as two trimers (C3), and six regulatory PyrI chains organized as three dimers (R2).

It carries out the reaction carbamoyl phosphate + L-aspartate = N-carbamoyl-L-aspartate + phosphate + H(+). Its pathway is pyrimidine metabolism; UMP biosynthesis via de novo pathway; (S)-dihydroorotate from bicarbonate: step 2/3. Catalyzes the condensation of carbamoyl phosphate and aspartate to form carbamoyl aspartate and inorganic phosphate, the committed step in the de novo pyrimidine nucleotide biosynthesis pathway. This is Aspartate carbamoyltransferase catalytic subunit from Pseudomonas entomophila (strain L48).